The sequence spans 86 residues: MGGISIWQLLIIAVIVVLLFGTNKLRTLGSDLGASIKGFKKAIGDDNQPQQAQKTSSDADFETKNITEKQSVAQSETSESKNKEQV.

The helical transmembrane segment at 1–21 threads the bilayer; that stretch reads MGGISIWQLLIIAVIVVLLFG. The tract at residues 42 to 86 is disordered; sequence AIGDDNQPQQAQKTSSDADFETKNITEKQSVAQSETSESKNKEQV. Composition is skewed to polar residues over residues 47–58 and 68–77; these read NQPQQAQKTSSD and EKQSVAQSET.

Belongs to the TatA/E family. The Tat system comprises two distinct complexes: a TatABC complex, containing multiple copies of TatA, TatB and TatC subunits, and a separate TatA complex, containing only TatA subunits. Substrates initially bind to the TatABC complex, which probably triggers association of the separate TatA complex to form the active translocon.

It localises to the cell inner membrane. Its function is as follows. Part of the twin-arginine translocation (Tat) system that transports large folded proteins containing a characteristic twin-arginine motif in their signal peptide across membranes. TatA could form the protein-conducting channel of the Tat system. The chain is Sec-independent protein translocase protein TatA from Photorhabdus laumondii subsp. laumondii (strain DSM 15139 / CIP 105565 / TT01) (Photorhabdus luminescens subsp. laumondii).